Consider the following 358-residue polypeptide: Peptide chain release factor 1 (358 aa).

Residue Q237 is modified to N5-methylglutamine.

The protein belongs to the prokaryotic/mitochondrial release factor family. Post-translationally, methylated by PrmC. Methylation increases the termination efficiency of RF1.

Its subcellular location is the cytoplasm. In terms of biological role, peptide chain release factor 1 directs the termination of translation in response to the peptide chain termination codons UAG and UAA. This Streptomyces coelicolor (strain ATCC BAA-471 / A3(2) / M145) protein is Peptide chain release factor 1.